Reading from the N-terminus, the 220-residue chain is NADH-quinone oxidoreductase subunit I (220 aa).

4Fe-4S ferredoxin-type domains follow at residues 71-102 (LQRL…IITH) and 112-141 (DSYT…MGNR). [4Fe-4S] cluster contacts are provided by C82, C85, C88, C92, C121, C124, C127, and C131. Positions 187–220 (MQATPLDYVQEPSKEESKEETPTNPESNKGDENV) are disordered. A compositionally biased stretch (basic and acidic residues) spans 198 to 207 (PSKEESKEET).

This sequence belongs to the complex I 23 kDa subunit family. NDH-1 is composed of 14 different subunits. Subunits NuoA, H, J, K, L, M, N constitute the membrane sector of the complex. It depends on [4Fe-4S] cluster as a cofactor.

Its subcellular location is the cell inner membrane. It carries out the reaction a quinone + NADH + 5 H(+)(in) = a quinol + NAD(+) + 4 H(+)(out). In terms of biological role, NDH-1 shuttles electrons from NADH, via FMN and iron-sulfur (Fe-S) centers, to quinones in the respiratory chain. The immediate electron acceptor for the enzyme in this species is believed to be ubiquinone. Couples the redox reaction to proton translocation (for every two electrons transferred, four hydrogen ions are translocated across the cytoplasmic membrane), and thus conserves the redox energy in a proton gradient. The protein is NADH-quinone oxidoreductase subunit I of Helicobacter pylori (strain Shi470).